A 344-amino-acid polypeptide reads, in one-letter code: Serine/threonine-protein kinase ppk13 (344 aa).

ATP is bound by residues 38–46 and K61; that span reads LGEGGFAFV. The Protein kinase domain maps to 76 to 344; the sequence is MKEADYHRKF…LSKIDLQINQ (269 aa). H192 (proton acceptor) is an active-site residue.

It belongs to the protein kinase superfamily. Ser/Thr protein kinase family.

It localises to the endoplasmic reticulum. Its subcellular location is the golgi apparatus. The enzyme catalyses L-seryl-[protein] + ATP = O-phospho-L-seryl-[protein] + ADP + H(+). The catalysed reaction is L-threonyl-[protein] + ATP = O-phospho-L-threonyl-[protein] + ADP + H(+). The protein is Serine/threonine-protein kinase ppk13 (ppk13) of Schizosaccharomyces pombe (strain 972 / ATCC 24843) (Fission yeast).